A 91-amino-acid polypeptide reads, in one-letter code: Non-specific lipid-transfer protein 1 (91 aa).

Disulfide bonds link Cys4/Cys51, Cys14/Cys28, Cys29/Cys74, and Cys49/Cys88.

It belongs to the plant LTP family. In terms of tissue distribution, detected in seeds (at protein level).

Plant non-specific lipid-transfer proteins transfer phospholipids as well as galactolipids across membranes. May play a role in wax or cutin deposition in the cell walls of expanding epidermal cells and certain secretory tissues. The polypeptide is Non-specific lipid-transfer protein 1 (Carum carvi (Caraway)).